The chain runs to 102 residues: Pole-localizer protein TmaR (102 aa).

Residues 7–34 (IINQARRKNKLKRELQDNQKKIRDNQKR) adopt a coiled-coil conformation.

It belongs to the pole-localizer TmaR family.

The protein localises to the cytoplasm. In terms of biological role, pole-localizer protein involved in the regulation of several cellular processes. This chain is Pole-localizer protein TmaR, found in Aliivibrio salmonicida (strain LFI1238) (Vibrio salmonicida (strain LFI1238)).